The sequence spans 796 residues: Protein U58 (796 aa).

Belongs to the herpesviridae UL87 family.

In Elephas maximus (Indian elephant), this protein is Protein U58.